A 287-amino-acid chain; its full sequence is tRNA pseudouridine synthase B (287 aa).

Aspartate 37 (nucleophile) is an active-site residue.

This sequence belongs to the pseudouridine synthase TruB family. Type 1 subfamily.

The enzyme catalyses uridine(55) in tRNA = pseudouridine(55) in tRNA. Responsible for synthesis of pseudouridine from uracil-55 in the psi GC loop of transfer RNAs. The polypeptide is tRNA pseudouridine synthase B (Caldicellulosiruptor saccharolyticus (strain ATCC 43494 / DSM 8903 / Tp8T 6331)).